We begin with the raw amino-acid sequence, 173 residues long: Glutamyl-tRNA(Gln) amidotransferase subunit F, mitochondrial (173 aa).

Residues 1–15 constitute a mitochondrion transit peptide; that stretch reads MSRFMIRAVFFRRYT.

The protein belongs to the GatF family. As to quaternary structure, subunit of the heterotrimeric GatFAB amidotransferase (AdT) complex, composed of A, B and F subunits.

The protein resides in the mitochondrion inner membrane. The catalysed reaction is L-glutamyl-tRNA(Gln) + L-glutamine + ATP + H2O = L-glutaminyl-tRNA(Gln) + L-glutamate + ADP + phosphate + H(+). In terms of biological role, allows the formation of correctly charged Gln-tRNA(Gln) through the transamidation of misacylated Glu-tRNA(Gln) in the mitochondria. The reaction takes place in the presence of glutamine and ATP through an activated gamma-phospho-Glu-tRNA(Gln). Required for proper protein synthesis within the mitochondrion. This is Glutamyl-tRNA(Gln) amidotransferase subunit F, mitochondrial from Candida glabrata (strain ATCC 2001 / BCRC 20586 / JCM 3761 / NBRC 0622 / NRRL Y-65 / CBS 138) (Yeast).